Here is a 143-residue protein sequence, read N- to C-terminus: Large-conductance mechanosensitive channel (143 aa).

The next 2 membrane-spanning stretches (helical) occupy residues 16-36 (VIDLAVGVVIGAAFGKIVTAL) and 84-104 (INTVVQFVIIAFAIFLVVKLI).

This sequence belongs to the MscL family. In terms of assembly, homopentamer.

The protein resides in the cell inner membrane. Channel that opens in response to stretch forces in the membrane lipid bilayer. May participate in the regulation of osmotic pressure changes within the cell. The chain is Large-conductance mechanosensitive channel from Xanthomonas campestris pv. campestris (strain 8004).